Reading from the N-terminus, the 173-residue chain is Photosystem I assembly protein Ycf3 (173 aa).

3 TPR repeats span residues 35–68, 72–105, and 120–153; these read AFVYYRDGMSAQAEGEYAEALEYYEEALTLEEDT, GYILYNMGLIYASNGDHDKALELYHQAIELNPRL, and GEKAKETGDHDGGEALFDQAADYWIRAIRMAPNN.

Belongs to the Ycf3 family.

Its subcellular location is the cellular thylakoid membrane. Its function is as follows. Essential for the assembly of the photosystem I (PSI) complex. May act as a chaperone-like factor to guide the assembly of the PSI subunits. This is Photosystem I assembly protein Ycf3 from Nostoc sp. (strain PCC 7120 / SAG 25.82 / UTEX 2576).